The primary structure comprises 191 residues: CASP-like protein 4C2 (191 aa).

Over 1–29 (MEAADSATNNSKDTHFYGKSRAENRRRSD) the chain is Cytoplasmic. A helical membrane pass occupies residues 30–50 (AMLLLFRALTFSFSLAAVVVM). The Extracellular segment spans residues 51–72 (GTNRYRINPQLKVSWYDFEPYR). A helical transmembrane segment spans residues 73–93 (YVLAVNAIICIYSFVETWLAV). The Cytoplasmic segment spans residues 94-116 (YTYLQGSYLLPEIFQVWFDYGHD). The chain crosses the membrane as a helical span at residues 117–137 (QGFAYLLFSANSAGVAMAQLL). The Extracellular portion of the chain corresponds to 138–161 (QSGNTLIHGAYHCTEAGGYCTQAR). The chain crosses the membrane as a helical span at residues 162-182 (VSIALGFVAFLFLALSSLLTG). The Cytoplasmic segment spans residues 183-191 (LRVARWYLR).

Belongs to the Casparian strip membrane proteins (CASP) family. In terms of assembly, homodimer and heterodimers.

It is found in the cell membrane. This Physcomitrium patens (Spreading-leaved earth moss) protein is CASP-like protein 4C2.